Here is a 221-residue protein sequence, read N- to C-terminus: PKHD-type hydroxylase PMT_0286 (221 aa).

Residues 80–174 form the Fe2OG dioxygenase domain; the sequence is HIHGVMFSRS…RLVCVGWIQS (95 aa). Fe cation contacts are provided by His98, Asp100, and His155. Arg165 contributes to the 2-oxoglutarate binding site.

The cofactor is Fe(2+). Requires L-ascorbate as cofactor.

The sequence is that of PKHD-type hydroxylase PMT_0286 from Prochlorococcus marinus (strain MIT 9313).